The primary structure comprises 157 residues: Probable succinate transporter subunit YjjB (157 aa).

The next 4 helical transmembrane spans lie at 10 to 30 (LAQD…VFNV), 55 to 75 (AGFN…SIGI), 87 to 107 (IFTV…TAMI), and 129 to 149 (FLKA…PGLW).

It belongs to the ThrE exporter (TC 2.A.79) family. In terms of assembly, the transporter is composed of YjjB and YjjP.

The protein resides in the cell inner membrane. Functionally, involved in succinate export with YjjP. Both proteins are required for export. Participates in succinate export, but also in the export of other dicarboxylates, such as fumarate and malate. Contributes to succinate production under both aerobic and anaerobic conditions, and increases fumarate and malate production during anaerobic succinate production. The protein is Probable succinate transporter subunit YjjB of Klebsiella aerogenes (strain ATCC 13048 / DSM 30053 / CCUG 1429 / JCM 1235 / KCTC 2190 / NBRC 13534 / NCIMB 10102 / NCTC 10006 / CDC 819-56) (Enterobacter aerogenes).